The primary structure comprises 437 residues: Pyrophosphate--fructose 6-phosphate 1-phosphotransferase (437 aa).

Residue Gly27 coordinates diphosphate. Asp122 provides a ligand contact to Mg(2+). Residues 147–149 (TID), 193–195 (MGR), Glu261, and 323–326 (YELR) each bind substrate. Catalysis depends on Asp149, which acts as the Proton acceptor.

The protein belongs to the phosphofructokinase type A (PFKA) family. PPi-dependent PFK group II subfamily. Clade 'Short' sub-subfamily. Homotetramer. Requires Mg(2+) as cofactor. Mn(2+) is required as a cofactor.

It is found in the cytoplasm. The catalysed reaction is beta-D-fructose 6-phosphate + diphosphate = beta-D-fructose 1,6-bisphosphate + phosphate + H(+). It functions in the pathway carbohydrate degradation; glycolysis; D-glyceraldehyde 3-phosphate and glycerone phosphate from D-glucose: step 3/4. Activated by AMP. Probably promotes oligomerization of the enzyme. Its function is as follows. Catalyzes the phosphorylation of D-fructose 6-phosphate, the first committing step of glycolysis. Uses inorganic phosphate (PPi) as phosphoryl donor instead of ATP like common ATP-dependent phosphofructokinases (ATP-PFKs), which renders the reaction reversible, and can thus function both in glycolysis and gluconeogenesis. Consistently, PPi-PFK can replace the enzymes of both the forward (ATP-PFK) and reverse (fructose-bisphosphatase (FBPase)) reactions. In Naegleria fowleri (Brain eating amoeba), this protein is Pyrophosphate--fructose 6-phosphate 1-phosphotransferase.